The sequence spans 285 residues: Gap junction Cx32.2 protein (285 aa).

The Cytoplasmic portion of the chain corresponds to Gly2–Thr19. The helical transmembrane segment at Val20 to Gly40 threads the bilayer. Residues Ala41–Arg76 lie on the Extracellular side of the membrane. The chain crosses the membrane as a helical span at residues Phe77–Ile99. Topologically, residues Ile100–Lys148 are cytoplasmic. The chain crosses the membrane as a helical span at residues Ile149–Phe171. The Extracellular portion of the chain corresponds to Pro172–Ile194. A helical membrane pass occupies residues Phe195 to Leu217. Over Ile218 to His285 the chain is Cytoplasmic. Positions Glu264–His285 are disordered. The span at Gly275 to His285 shows a compositional bias: basic and acidic residues.

Belongs to the connexin family. Beta-type (group I) subfamily. As to quaternary structure, a connexon is composed of a hexamer of connexins.

It localises to the cell membrane. Its subcellular location is the cell junction. The protein resides in the gap junction. Its function is as follows. One gap junction consists of a cluster of closely packed pairs of transmembrane channels, the connexons, through which materials of low MW diffuse from one cell to a neighboring cell. May be involved in ovarian follicular maturation. This Micropogonias undulatus (Atlantic croaker) protein is Gap junction Cx32.2 protein.